Here is a 120-residue protein sequence, read N- to C-terminus: Small ribosomal subunit protein uS11 (120 aa).

It belongs to the universal ribosomal protein uS11 family. Part of the 30S ribosomal subunit. Interacts with proteins S7 and S18. Binds to IF-3.

In terms of biological role, located on the platform of the 30S subunit, it bridges several disparate RNA helices of the 16S rRNA. Forms part of the Shine-Dalgarno cleft in the 70S ribosome. This Neorickettsia sennetsu (strain ATCC VR-367 / Miyayama) (Ehrlichia sennetsu) protein is Small ribosomal subunit protein uS11.